The sequence spans 61 residues: Metallothionein-1F (61 aa).

Residue Met-1 is modified to N-acetylmethionine. Positions 1-29 are beta; the sequence is MDPNCSCPTGGSCTCAGSCTCKACRCTSC. Residues Cys-5, Cys-7, Cys-13, Cys-15, Cys-19, Cys-21, Cys-24, Cys-26, Cys-29, Cys-33, Cys-34, Cys-36, Cys-37, Cys-41, Cys-44, Cys-48, Cys-50, and Cys-57 each coordinate a divalent metal cation. The alpha stretch occupies residues 30-61; the sequence is KKSCCSCCPAGCAKCAQGCICKGASDKCSCCA. Ser-58 bears the Phosphoserine mark. 2 residues coordinate a divalent metal cation: Cys-59 and Cys-60.

Belongs to the metallothionein superfamily. Type 1 family. Monomer.

Functionally, metallothioneins have a high content of cysteine residues that bind various heavy metals; these proteins are transcriptionally regulated by both heavy metals and glucocorticoids. This is Metallothionein-1F (MT1F) from Sus scrofa (Pig).